Reading from the N-terminus, the 217-residue chain is Probable transaldolase (217 aa).

The Schiff-base intermediate with substrate role is filled by K83.

It belongs to the transaldolase family. Type 3B subfamily.

The protein localises to the cytoplasm. The enzyme catalyses D-sedoheptulose 7-phosphate + D-glyceraldehyde 3-phosphate = D-erythrose 4-phosphate + beta-D-fructose 6-phosphate. Its pathway is carbohydrate degradation; pentose phosphate pathway; D-glyceraldehyde 3-phosphate and beta-D-fructose 6-phosphate from D-ribose 5-phosphate and D-xylulose 5-phosphate (non-oxidative stage): step 2/3. Its function is as follows. Transaldolase is important for the balance of metabolites in the pentose-phosphate pathway. The protein is Probable transaldolase of Clostridium botulinum (strain Okra / Type B1).